The following is a 65-amino-acid chain: Large ribosomal subunit protein bL35 (65 aa).

Residues 1 to 28 form a disordered region; it reads MPKMKTNRSAAKRFGKTGSGKFTRRRQN.

It belongs to the bacterial ribosomal protein bL35 family.

In Solidesulfovibrio magneticus (strain ATCC 700980 / DSM 13731 / RS-1) (Desulfovibrio magneticus), this protein is Large ribosomal subunit protein bL35.